We begin with the raw amino-acid sequence, 370 residues long: Peptidyl-prolyl cis-trans isomerase D (370 aa).

The residue at position 5 (serine 5) is a Phosphoserine. Residues 19–183 form the PPIase cyclophilin-type domain; it reads FFDVDIGGER…KLCVIAECGE (165 aa). Lysine 171 is subject to N6-acetyllysine. The segment at 185–215 is chaperone activity; that stretch reads KEGDEWGIFPKDGSGDSHPDFPEDADIDLKD. Serine 198 carries the post-translational modification Phosphoserine. The segment at 214–370 is interaction with HSP90AB1; the sequence is KDVDKILLIS…EKAVYAKMFA (157 aa). TPR repeat units follow at residues 223–256, 273–306, and 308–340; these read SEDL…LDSS, LSCV…DPSN, and KALY…APGD.

It belongs to the cyclophilin-type PPIase family. PPIase D subfamily. Identified in ESR1 or NR3C1/GCR steroid receptor-chaperone complexes. Found in HSP90 chaperone complexes with kinase clients LCK or EIF2AK1. Two monomers associate with one HSP90 homodimer. Interacts with HSP90AA1. Interacts with HSP90AB1; PPID and FKBP4 compete for binding to HSP90AB1 and the interaction is mutually exclusive with the PPID:HSPA8 interaction. Interacts with HSPA8; PPID and STIP1 but not FKBP4 compete for binding to HSPA8 and the interaction is mutually exclusive with the PPID:HSP90AB1 interaction. Interacts with S100A1 and S100A2; the interactions dissociate the PPID:HSP90AA1 interaction. Interacts with S100A6. Interacts with MYB, ILF2, XRCC6, RACK1 and RPS3. Interacts with cytoplasmic dynein 1 intermediate chain (DYNC1I1 or DYNC1I2).

It is found in the cytoplasm. It localises to the nucleus. The protein localises to the nucleolus. Its subcellular location is the nucleoplasm. The catalysed reaction is [protein]-peptidylproline (omega=180) = [protein]-peptidylproline (omega=0). Less sensitive to inhibition by cyclosporin A than is CYP-18. In terms of biological role, PPIase that catalyzes the cis-trans isomerization of proline imidic peptide bonds in oligopeptides and may therefore assist protein folding. Proposed to act as a co-chaperone in HSP90 complexes such as in unligated steroid receptors heterocomplexes. Different co-chaperones seem to compete for association with HSP90 thus establishing distinct HSP90-co-chaperone-receptor complexes with the potential to exert tissue-specific receptor activity control. May have a preference for estrogen receptor complexes and is not found in glucocorticoid receptor complexes. May be involved in cytoplasmic dynein-dependent movement of the receptor from the cytoplasm to the nucleus. May regulate MYB by inhibiting its DNA-binding activity. Involved in regulation of AHR signaling by promoting the formation of the AHR:ARNT dimer; the function is independent of HSP90 but requires the chaperone activity region. Involved in regulation of UV radiation-induced apoptosis. The chain is Peptidyl-prolyl cis-trans isomerase D from Rattus norvegicus (Rat).